The primary structure comprises 273 residues: Large ribosomal subunit protein uL2cz/uL2cy (273 aa).

Disordered regions lie at residues 1-20 and 224-254; these read MAIHLYKTSTPSTRKGAVDS and NPVDHPHGGGEGRAPIGRKKPTTPWGYPALG.

The protein belongs to the universal ribosomal protein uL2 family. Part of the 50S ribosomal subunit.

The protein resides in the plastid. It localises to the chloroplast. The sequence is that of Large ribosomal subunit protein uL2cz/uL2cy (rpl2-A) from Nuphar advena (Common spatterdock).